Consider the following 267-residue polypeptide: Phosphatidylcholine synthase (267 aa).

At 1–42 (MILWRIVRPGAAMAYVQTGLVLIAEAMDTQQDSLKPRPAMRA) the chain is on the cytoplasmic side. Residues 43–63 (AAFSVHVFTAFGAAIALLAML) form a helical membrane-spanning segment. Residues 64–69 (EAVREH) lie on the Periplasmic side of the membrane. A helical transmembrane segment spans residues 70–90 (WAAMFQWLGVALIIDAIDGPI). Topologically, residues 91–102 (ARRLDVKNVQPN) are cytoplasmic. Residues 103–123 (WSGDVLDLVVDFVTYVFVPAY) form a helical membrane-spanning segment. A topological domain (periplasmic) is located at residue Ala124. The chain crosses the membrane as a helical span at residues 125–145 (IVASGLLLPVAAPLLGVAIIV). At 146–162 (TSALYFADLRMKADDNH) the chain is on the cytoplasmic side. A helical membrane pass occupies residues 163–183 (FRGFPALWNAAAFYLFLLHWP). Position 184 (Pro184) is a topological domain, periplasmic. Residues 185-205 (LWSTLLVAALVVLTFVPFHVL) form a helical membrane-spanning segment. At 206 to 215 (HPVRVVRLRW) the chain is on the cytoplasmic side. A helical membrane pass occupies residues 216–236 (LTMSLIGIWAVLSLYTLDMDF). At 237-239 (RVG) the chain is on the periplasmic side. Residues 240–260 (PGVTLALCAIALWISFSDALI) traverse the membrane as a helical segment. Residues 261-267 (RFARSFA) are Cytoplasmic-facing.

Belongs to the CDP-alcohol phosphatidyltransferase class-I family. Mn(2+) is required as a cofactor.

Its subcellular location is the cell inner membrane. It catalyses the reaction a CDP-1,2-diacyl-sn-glycerol + choline = a 1,2-diacyl-sn-glycero-3-phosphocholine + CMP + H(+). In terms of biological role, condenses choline with CDP-diglyceride to produce phosphatidylcholine and CMP. The sequence is that of Phosphatidylcholine synthase from Bradyrhizobium diazoefficiens (strain JCM 10833 / BCRC 13528 / IAM 13628 / NBRC 14792 / USDA 110).